Reading from the N-terminus, the 474-residue chain is Vacuolar basic amino acid transporter 2 (474 aa).

Over 1-33 the chain is Cytoplasmic; that stretch reads MSISNWITTAYLITSTSFQPLYGSFSDALGRRN. Residues 34–54 traverse the membrane as a helical segment; it reads CLFFANGAFTIGCLACGFSKN. The Vacuolar segment spans residues 55-62; the sequence is IYMLSFMR. A helical transmembrane segment spans residues 63-85; sequence ALTGIGGGGLITLSTIVNSDVIP. At 86-97 the chain is on the cytoplasmic side; it reads SSKRGIFQAFQN. Residues 98–118 traverse the membrane as a helical segment; the sequence is LLLGFGAICGASFGGTIASSI. The Vacuolar portion of the chain corresponds to 119-121; sequence GWR. A helical membrane pass occupies residues 122–142; the sequence is WCFLIQVPISVISSILMNYYV. Residues 143-167 are Cytoplasmic-facing; the sequence is PNQKEYNRQNSSIFQNPGKILRDID. A helical transmembrane segment spans residues 168–188; the sequence is VMGSILIITGLTLQLLYLSLG. Residues 189–196 lie on the Vacuolar side of the membrane; the sequence is CSTSKLSW. A helical membrane pass occupies residues 197–217; sequence TSPSVLLLLVGSVIILLLFIL. Topologically, residues 218–238 are cytoplasmic; sequence HERKTSARAIIPMELVNSSYS. A helical membrane pass occupies residues 239-259; sequence VVVLSISILVGFASYAYLFTL. Residues 260–273 lie on the Vacuolar side of the membrane; it reads PLFFQIVLGDSTAK. Residues 274 to 294 form a helical membrane-spanning segment; it reads AGLRLTIPSLFTPVGSLITGF. Residues 295 to 303 are Cytoplasmic-facing; sequence SMSKYNCLR. Residues 304-324 traverse the membrane as a helical segment; sequence LLLYIGISLMFLGNFLFLFIE. Over 325-331 the chain is Vacuolar; that stretch reads KTSPNWL. The helical transmembrane segment at 332–352 threads the bilayer; it reads IGLFLIPANLGQGITFPTTLF. Topologically, residues 353-375 are cytoplasmic; sequence TFIFMFSKSDQATATSTLYLFRS. The helical transmembrane segment at 376 to 396 threads the bilayer; the sequence is IGSVWGVAISAGVIQLSFAGL. The Vacuolar portion of the chain corresponds to 397 to 447; that stretch reads LRSNLKGLLDENKIKKLIVQLSANSSYIGSLHGEVKNTVIKSFDEATKRAH. An N-linked (GlcNAc...) asparagine glycan is attached at asparagine 420. A helical membrane pass occupies residues 448-468; sequence LMSTLLSSLALILCILKDNLA. At 469 to 474 the chain is on the cytoplasmic side; the sequence is KPKTRR.

Belongs to the major facilitator superfamily.

It is found in the vacuole membrane. Transporter required for vacuolar uptake of histidine, arginine and lysine and to a lesser extent tyrosine. This Saccharomyces cerevisiae (strain ATCC 204508 / S288c) (Baker's yeast) protein is Vacuolar basic amino acid transporter 2 (VBA2).